Reading from the N-terminus, the 358-residue chain is DNA integrity scanning protein DisA (358 aa).

One can recognise a DAC domain in the interval 6 to 144; the sequence is RPTLREAVAR…RGERHVLTDS (139 aa). ATP-binding positions include glycine 73, leucine 91, and 104-108; that span reads TRHRS.

It belongs to the DisA family. Homooctamer. It depends on Mg(2+) as a cofactor.

The enzyme catalyses 2 ATP = 3',3'-c-di-AMP + 2 diphosphate. Functionally, participates in a DNA-damage check-point. DisA forms globular foci that rapidly scan along the chromosomes searching for lesions. Its function is as follows. Also has diadenylate cyclase activity, catalyzing the condensation of 2 ATP molecules into cyclic di-AMP (c-di-AMP). c-di-AMP likely acts as a signaling molecule that may couple DNA integrity with a cellular process. This is DNA integrity scanning protein DisA from Mycobacterium tuberculosis (strain ATCC 25177 / H37Ra).